We begin with the raw amino-acid sequence, 462 residues long: Probable DNA-directed RNA polymerase subunit 343L (462 aa).

This sequence belongs to the RNA polymerase beta' chain family.

The enzyme catalyses RNA(n) + a ribonucleoside 5'-triphosphate = RNA(n+1) + diphosphate. Component of the DNA-dependent RNA polymerase that catalyzes the transcription in the cytoplasm of viral DNA into RNA using the four ribonucleoside triphosphates as substrates. The chain is Probable DNA-directed RNA polymerase subunit 343L from Acheta domesticus (House cricket).